We begin with the raw amino-acid sequence, 35 residues long: Conotoxin Ca15a (35 aa).

Position 8 is a 4-hydroxyproline (proline 8).

Post-translationally, contains 4 disulfide bonds. In terms of tissue distribution, expressed by the venom duct.

The protein localises to the secreted. In Conus caracteristicus (Characteristic cone), this protein is Conotoxin Ca15a.